The following is a 258-amino-acid chain: SufE-like protein 2, chloroplastic (258 aa).

The tract at residues 1-32 is disordered; it reads MNTSSSFKALASPPLISTSRPTTKSFPNPRFT. A compositionally biased stretch (polar residues) spans 15 to 32; the sequence is LISTSRPTTKSFPNPRFT. The Cysteine persulfide intermediate role is filled by Cys-122.

It belongs to the SufE family. Highly expressed in flowers and pollen, and at low levels in roots, leaves and stems.

It is found in the plastid. Its subcellular location is the chloroplast. Its pathway is cofactor biosynthesis; iron-sulfur cluster biosynthesis. Its function is as follows. Participates in cysteine desulfurization mediated by NFS2. Can activate the cysteine desulfurase activity of NFS2 in vitro. Cysteine desulfurization mobilizes sulfur from L-cysteine to yield L-alanine and supplies the inorganic sulfur for iron-sulfur (Fe-S) cluster formation. This chain is SufE-like protein 2, chloroplastic (SUFE2), found in Arabidopsis thaliana (Mouse-ear cress).